A 340-amino-acid polypeptide reads, in one-letter code: MIAARAANLQVAMKALALAVLALAYAAATARAEQCGRQAGGARCPNRLCCSRWGWCGLTDDYCKGGCQSQCRVSRDGGDDDVAAVLLTAPGGGRAGVASVVTSDQFERMLPHRDDAACPARGFYAYRAFVAAAGAFPAFAATGDADTRKREVAAFLAQTSHATSGGPYSWGYCYKEVKGATSDFCVPNARWPCAPGKAYHARGPMQIAYNYNYGAAGEAIGADLLGNPELVATDPTVAFKTALWLWMTARSPSQPSPHAVVTGQWTPTPADSAAGRAPGYGLTTNILTGGLQCAGGNGGADRVAFYKRYCDVLGVGYGPNLDCFGQAPFDGDIMSASAAK.

A signal peptide spans 1–32; the sequence is MIAARAANLQVAMKALALAVLALAYAAATARA. A Chitin-binding type-1 domain is found at 33-73; the sequence is EQCGRQAGGARCPNRLCCSRWGWCGLTDDYCKGGCQSQCRV. Cystine bridges form between cysteine 35-cysteine 50, cysteine 44-cysteine 56, cysteine 49-cysteine 63, cysteine 67-cysteine 71, cysteine 118-cysteine 173, cysteine 185-cysteine 193, and cysteine 293-cysteine 323.

Belongs to the glycosyl hydrolase 19 family. Chitinase class I subfamily. Expressed in pistils, stamens and lodicules.

It catalyses the reaction Random endo-hydrolysis of N-acetyl-beta-D-glucosaminide (1-&gt;4)-beta-linkages in chitin and chitodextrins.. Its function is as follows. Hydrolyzes chitin and may play a role in defense against fungal pathogens containing chitin. The sequence is that of Chitinase 7 (Cht7) from Oryza sativa subsp. japonica (Rice).